The chain runs to 353 residues: Virulence plasmid protein pGP2-D (353 aa).

This is Virulence plasmid protein pGP2-D from Chlamydia muridarum (strain MoPn / Nigg).